The sequence spans 42 residues: Conodipine-M beta chain (42 aa).

In terms of assembly, heterodimer of an alpha and a beta chains; probably disulfide-linked. In terms of tissue distribution, expressed by the venom duct.

The protein localises to the secreted. In terms of biological role, heterodimer: conodipine-M catalyzes the calcium-dependent hydrolysis of the 2-acyl groups in 3-sn-phosphoglycerides. This activity may be supported by the alpha chain. Conodipine-M inhibits the binding of isradipine (a ligand specific for L-type calcium channel) to L-type calcium channels. This is Conodipine-M beta chain from Conus magus (Magical cone).